A 131-amino-acid chain; its full sequence is Ribonuclease VapC42 (131 aa).

Residues 1 to 125 (MIVDTSAIVA…FRGDDFTHTD (125 aa)) form the PINc domain. The Mg(2+) site is built by D4 and D100.

This sequence belongs to the PINc/VapC protein family. Mg(2+) serves as cofactor.

Toxic component of a type II toxin-antitoxin (TA) system. An RNase. Its cognate antitoxin is VapB42. The chain is Ribonuclease VapC42 from Mycobacterium tuberculosis (strain CDC 1551 / Oshkosh).